Consider the following 394-residue polypeptide: Elongation factor Tu (394 aa).

A tr-type G domain is found at 10-204 (KPHVNVGTIG…FLDSYIPEPE (195 aa)). The tract at residues 19-26 (GHVDHGKT) is G1. 19–26 (GHVDHGKT) contributes to the GTP binding site. Residue Thr-26 participates in Mg(2+) binding. Residues 60-64 (GITIN) form a G2 region. Residues 81-84 (DCPG) form a G3 region. GTP is bound by residues 81–85 (DCPGH) and 136–139 (NKCD). Residues 136 to 139 (NKCD) are G4. The segment at 174 to 176 (SAL) is G5.

Belongs to the TRAFAC class translation factor GTPase superfamily. Classic translation factor GTPase family. EF-Tu/EF-1A subfamily. As to quaternary structure, monomer.

It localises to the cytoplasm. It catalyses the reaction GTP + H2O = GDP + phosphate + H(+). Its function is as follows. GTP hydrolase that promotes the GTP-dependent binding of aminoacyl-tRNA to the A-site of ribosomes during protein biosynthesis. The sequence is that of Elongation factor Tu from Salmonella arizonae (strain ATCC BAA-731 / CDC346-86 / RSK2980).